The chain runs to 252 residues: NDR1/HIN1-like protein 6 (252 aa).

The tract at residues 1-46 (MSQHQKIYPVQDPEAATARPTAPLVPRGSSRSEHGDPSKVPLNQRP) is disordered. Residues 70 to 90 (FCFLLLLVVAVGASIGILYLV) traverse the membrane as a helical segment. N-linked (GlcNAc...) asparagine glycans are attached at residues asparagine 121, asparagine 154, asparagine 166, and asparagine 180.

Homodimer. As to expression, highly expressed in seeds and at lower level in roots and senescing leaves. Expressed in leaves and flowers.

The protein resides in the cell membrane. It localises to the cytoplasm. Its subcellular location is the cytosol. Plays an important role in the abiotic stresses-induced abscisic acid (ABA) signaling and biosynthesis. Acts as a positive regulator of ABA-mediated seed germination inhibition. Functions downstream of ABF2/AREB1, ABF4/AREB2 and ABF3. The sequence is that of NDR1/HIN1-like protein 6 from Arabidopsis thaliana (Mouse-ear cress).